The following is a 1368-amino-acid chain: DNA-directed RNA polymerase subunit beta (1368 aa).

It belongs to the RNA polymerase beta chain family. The RNAP catalytic core consists of 2 alpha, 1 beta, 1 beta' and 1 omega subunit. When a sigma factor is associated with the core the holoenzyme is formed, which can initiate transcription.

The catalysed reaction is RNA(n) + a ribonucleoside 5'-triphosphate = RNA(n+1) + diphosphate. Functionally, DNA-dependent RNA polymerase catalyzes the transcription of DNA into RNA using the four ribonucleoside triphosphates as substrates. The protein is DNA-directed RNA polymerase subunit beta of Cupriavidus pinatubonensis (strain JMP 134 / LMG 1197) (Cupriavidus necator (strain JMP 134)).